The following is a 230-amino-acid chain: MPGCLPADSVGTMASLMPLSPYLSPTVLLLVSCDLGFVRADRPPSPVNVTVTHLRANSATVSWDVPEGNIVIGYSISQQRQNGPGQRVIREVNTTTRACALWGLAEDSDYTVQVRSIGLRGESPPGPRVHFRTLKGSDRLPSNSSSPGDITVEGLDGERPLQTGEVVIIVVVLLMWAAVIGLFCRQYDIIKDNDSNNNPKEKGKGPEQSPQGRPVGTRQKKSPSINTIDV.

A signal peptide spans Met-1–Ala-40. At Asp-41–Thr-163 the chain is on the extracellular side. Residues Pro-43 to Gly-136 enclose the Fibronectin type-III domain. Residues Asn-48 and Asn-143 are each glycosylated (N-linked (GlcNAc...) asparagine). Residues Gly-118 to Asp-156 form a disordered region. The helical transmembrane segment at Gly-164 to Cys-184 threads the bilayer. The Cytoplasmic portion of the chain corresponds to Arg-185–Val-230. Residues Asn-193 to Gly-205 are compositionally biased toward basic and acidic residues. The tract at residues Asn-193 to Val-230 is disordered.

The protein resides in the membrane. It is found in the secreted. Has anti-inflammatory properties. In the colon, acts on macrophages to down-regulate inflammation. May suppress osteoclastogenesis and mature osteoclast resorptive function. In white adipose tissue, decreases local inflammation, via interaction with GPR116. Also required for proper systemic glucose tolerance, specifically sensitizing white adipocytes to insulin and promoting glucose uptake. The insulin sensitizing function in adipose tissue is mediated by interaction with ADGRF5/GPR116 and activation of cAMP signaling. The protein is Fibronectin type III domain-containing protein 4 (FNDC4) of Bos taurus (Bovine).